Consider the following 295-residue polypeptide: Small ribosomal subunit protein uS2 (295 aa).

S2 bears the N-acetylserine mark. S43 is subject to Phosphoserine. An N6-acetyllysine modification is found at K52. The tract at residues T54–Q113 is interaction with PPP1R16B. The residue at position 89 (K89) is an N6-acetyllysine; alternate. K89 is covalently cross-linked (Glycyl lysine isopeptide (Lys-Gly) (interchain with G-Cter in SUMO2); alternate). Residue T97 is modified to Phosphothreonine. Laminin-binding stretches follow at residues I161–R180 and R205–G229. 5 [DE]-W-[ST] repeats span residues E230–T232, D247–S249, D266–S268, D275–S277, and E293–S295. Residues Q242–S295 are laminin-binding. A disordered region spans residues D266–S295.

It belongs to the universal ribosomal protein uS2 family. In terms of assembly, monomer (37LRP) and homodimer (67LR). Component of the small ribosomal subunit. Mature ribosomes consist of a small (40S) and a large (60S) subunit. The 40S subunit contains about 33 different proteins and 1 molecule of RNA (18S). The 60S subunit contains about 49 different proteins and 3 molecules of RNA (28S, 5.8S and 5S). Interacts with RPS21. Interacts with several laminins including at least LAMB1. Interacts with MDK. The mature dimeric form interacts with PPP1R16B (via its fourth ankyrin repeat). Interacts with PPP1CA only in the presence of PPP1R16B. Acylated. Acylation may be a prerequisite for conversion of the monomeric 37 kDa laminin receptor precursor (37LRP) to the mature dimeric 67 kDa laminin receptor (67LR), and may provide a mechanism for membrane association. In terms of processing, cleaved by stromelysin-3 (ST3) at the cell surface. Cleavage by stromelysin-3 may be a mechanism to alter cell-extracellular matrix interactions.

The protein resides in the cell membrane. It localises to the cytoplasm. Its subcellular location is the nucleus. Its function is as follows. Required for the assembly and/or stability of the 40S ribosomal subunit. Required for the processing of the 20S rRNA-precursor to mature 18S rRNA in a late step of the maturation of 40S ribosomal subunits. Also functions as a cell surface receptor for laminin. Plays a role in cell adhesion to the basement membrane and in the consequent activation of signaling transduction pathways. May play a role in cell fate determination and tissue morphogenesis. Also acts as a receptor for several other ligands, including the pathogenic prion protein, viruses, and bacteria. Acts as a PPP1R16B-dependent substrate of PPP1CA. This is Small ribosomal subunit protein uS2 from Sus scrofa (Pig).